The primary structure comprises 96 residues: MSRISVENVKHVAHLARLAITDQEAEKFQKQLDAIVTFAEQLNELDTTNVKPTTHVLTMRNVMREDVPEQGLPVEEVLKNAPDHKENQIRVPAVLE.

This sequence belongs to the GatC family. As to quaternary structure, heterotrimer of A, B and C subunits.

The enzyme catalyses L-glutamyl-tRNA(Gln) + L-glutamine + ATP + H2O = L-glutaminyl-tRNA(Gln) + L-glutamate + ADP + phosphate + H(+). It carries out the reaction L-aspartyl-tRNA(Asn) + L-glutamine + ATP + H2O = L-asparaginyl-tRNA(Asn) + L-glutamate + ADP + phosphate + 2 H(+). Allows the formation of correctly charged Asn-tRNA(Asn) or Gln-tRNA(Gln) through the transamidation of misacylated Asp-tRNA(Asn) or Glu-tRNA(Gln) in organisms which lack either or both of asparaginyl-tRNA or glutaminyl-tRNA synthetases. The reaction takes place in the presence of glutamine and ATP through an activated phospho-Asp-tRNA(Asn) or phospho-Glu-tRNA(Gln). This Bacillus cytotoxicus (strain DSM 22905 / CIP 110041 / 391-98 / NVH 391-98) protein is Aspartyl/glutamyl-tRNA(Asn/Gln) amidotransferase subunit C.